We begin with the raw amino-acid sequence, 410 residues long: Venom metalloproteinase 2 (410 aa).

An N-terminal signal peptide occupies residues 1–22 (MDTFILTYSILFLALFIESIHS). N-linked (GlcNAc...) asparagine glycans are attached at residues Asn64, Asn112, Asn187, Asn231, Asn292, and Asn307. Residues 214–410 (FYPKLLVLVD…NNNVSKFIWS (197 aa)) enclose the Peptidase M12B domain. A Zn(2+)-binding site is contributed by His365. Residue Glu366 is part of the active site. Positions 369 and 375 each coordinate Zn(2+). An N-linked (GlcNAc...) asparagine glycan is attached at Asn403.

It in the C-terminal section; belongs to the venom metalloproteinase (M12B) family. In terms of assembly, monomer. Requires Zn(2+) as cofactor. In terms of tissue distribution, expressed by the venom gland.

It is found in the secreted. The gelatinase activity is inhibited by EDTA. Functionally, the recombinant protein has gelatinase activity. In vivo, injection of this recombinant into fifth instar L.oleracea (host) larvae results in partial insect mortality associated with the molt to sixth instar, with surviving insects showing retarded development and growth. The sequence is that of Venom metalloproteinase 2 from Eulophus pennicornis (Parasitoid wasp).